The primary structure comprises 301 residues: Thioredoxin-related transmembrane protein 2-A (301 aa).

Positions 1–19 (MSLIRGLISTIYYLPKIYK) are cleaved as a signal peptide. The Extracellular segment spans residues 20 to 111 (WFYRPYYFLS…VVLFFRVDLR (92 aa)). The chain crosses the membrane as a helical span at residues 112–132 (FGLLYLTLCVVFLITCKPPAY). The region spanning 122–269 (VFLITCKPPA…IFQKYKKFSK (148 aa)) is the Thioredoxin domain. The Cytoplasmic portion of the chain corresponds to 133 to 301 (MGPENIKYFR…EEDSESKKDK (169 aa)). The tract at residues 268–301 (SKGEKPEEPQPVLEEESESPLEEEEEDSESKKDK) is disordered. A compositionally biased stretch (acidic residues) spans 280-295 (LEEESESPLEEEEEDS). A Di-lysine motif motif is present at residues 298–301 (KKDK).

As to quaternary structure, monomer. Homodimer; disulfide-linked. Occurs in both reduced and oxidized monomeric form. Oxidative conditions increase homodimerization.

The protein resides in the endoplasmic reticulum membrane. The protein localises to the mitochondrion membrane. Functionally, endoplasmic reticulum and mitochondria-associated protein that probably functions as a regulator of cellular redox state and thereby regulates protein post-translational modification, protein folding and mitochondrial activity. The sequence is that of Thioredoxin-related transmembrane protein 2-A from Danio rerio (Zebrafish).